The sequence spans 97 residues: Large ribosomal subunit protein uL23 (97 aa).

It belongs to the universal ribosomal protein uL23 family. As to quaternary structure, part of the 50S ribosomal subunit. Contacts protein L29, and trigger factor when it is bound to the ribosome.

One of the early assembly proteins it binds 23S rRNA. One of the proteins that surrounds the polypeptide exit tunnel on the outside of the ribosome. Forms the main docking site for trigger factor binding to the ribosome. This Thermoanaerobacter pseudethanolicus (strain ATCC 33223 / 39E) (Clostridium thermohydrosulfuricum) protein is Large ribosomal subunit protein uL23.